The primary structure comprises 376 residues: Histidinol dehydrogenase (376 aa).

Residues tyrosine 100 and asparagine 182 each contribute to the NAD(+) site. The substrate site is built by serine 205, glutamine 227, and histidine 230. Zn(2+) is bound by residues glutamine 227 and histidine 230. Catalysis depends on proton acceptor residues glutamate 275 and histidine 276. Residues histidine 276, aspartate 309, glutamate 363, and histidine 368 each coordinate substrate. A Zn(2+)-binding site is contributed by aspartate 309. Histidine 368 contributes to the Zn(2+) binding site.

Belongs to the histidinol dehydrogenase family. Zn(2+) is required as a cofactor.

It carries out the reaction L-histidinol + 2 NAD(+) + H2O = L-histidine + 2 NADH + 3 H(+). The protein operates within amino-acid biosynthesis; L-histidine biosynthesis; L-histidine from 5-phospho-alpha-D-ribose 1-diphosphate: step 9/9. In terms of biological role, catalyzes the sequential NAD-dependent oxidations of L-histidinol to L-histidinaldehyde and then to L-histidine. In Thermococcus kodakarensis (strain ATCC BAA-918 / JCM 12380 / KOD1) (Pyrococcus kodakaraensis (strain KOD1)), this protein is Histidinol dehydrogenase.